Reading from the N-terminus, the 166-residue chain is MSKLAQKSGLVWLWLSLLLLVVDFASKTLVVSSMAYQESINLLPVFSITYVHNYGAAYSFLSDAGGWQRWFLSAIAIAISGLLVWWLKRLPATNKVLCAAYSLVLAGAIGNLYDRIAYGYVIDFIHVFYKNSHFPVFNVADCAICIGAALLLFDAFTGESPKEHKA.

Transmembrane regions (helical) follow at residues 11–31 (VWLWLSLLLLVVDFASKTLVV), 42–62 (LLPVFSITYVHNYGAAYSFLS), 67–87 (WQRWFLSAIAIAISGLLVWWL), and 90–110 (LPATNKVLCAAYSLVLAGAIG). Catalysis depends on residues Asp123 and Asp141. The helical transmembrane segment at 133–153 (HFPVFNVADCAICIGAALLLF) threads the bilayer.

This sequence belongs to the peptidase A8 family.

The protein resides in the cell inner membrane. The enzyme catalyses Release of signal peptides from bacterial membrane prolipoproteins. Hydrolyzes -Xaa-Yaa-Zaa-|-(S,diacylglyceryl)Cys-, in which Xaa is hydrophobic (preferably Leu), and Yaa (Ala or Ser) and Zaa (Gly or Ala) have small, neutral side chains.. The protein operates within protein modification; lipoprotein biosynthesis (signal peptide cleavage). Functionally, this protein specifically catalyzes the removal of signal peptides from prolipoproteins. The protein is Lipoprotein signal peptidase of Pseudoalteromonas translucida (strain TAC 125).